The chain runs to 374 residues: MSRVPSPPPPAEMTSGPVAESWCYTQIKVVKFSYMWTINNFSFCREEMGEVIKSSTFSSGANDKLKWCLRVNPKGLDEESKDYLSLYLLLVSCPKSEVRAKFKFSILNAKGEETKAMESQRAYRFVQGKDWGFKKFIRRDFLLDEANGLLPDDKLTLFCEVSVVQDSVNISGQNTMNMVKVPDCRLADELGGLWEHSRFTDCSLCVAGQEFQAHKAILAARSPVFSAMFEHEMEESKKNRVEINDVEAEVFKEMMFFIYTGKAPNLDKMADDLLAAADKYALERLKVMCEDALCTSLSVENAAEILILADLHSADQLKTQAVDFINYHASDVMETSGWKSMVASHPHLVAEAYRSLASAQCPFLGPPRKRLKQS.

An MATH domain is found at 31–161 (KFSYMWTINN…DDKLTLFCEV (131 aa)). The tract at residues 71-191 (VNPKGLDEES…PDCRLADELG (121 aa)) is required for nuclear localization. The region spanning 173-297 (QNTMNMVKVP…MCEDALCTSL (125 aa)) is the BTB domain. The homodimerization stretch occupies residues 297–355 (LSVENAAEILILADLHSADQLKTQAVDFINYHASDVMETSGWKSMVASHPHLVAEAYRS).

This sequence belongs to the Tdpoz family. Homodimer. Part of cullin-RING-based BCR (BTB-CUL3-RBX1) E3 ubiquitin-protein ligase complexes that contain CUL3 and SPOP, plus a target protein.

The protein resides in the nucleus. The protein localises to the nucleus speckle. The protein operates within protein modification; protein ubiquitination. Its function is as follows. Component of a cullin-RING-based BCR (BTB-CUL3-RBX1) E3 ubiquitin-protein ligase complex that mediates the ubiquitination of target proteins, leading most often to their proteasomal degradation. The chain is Speckle-type POZ protein (spop) from Danio rerio (Zebrafish).